A 177-amino-acid polypeptide reads, in one-letter code: MEQFRGTTIVCVRRNGRVALGGDGQVTLGNTVMKGNARKVRRLYGDKVLAGFAGGTADAFTLFERFEGKLEKYSGNLTRAAVELAKDWRTERALRRLEALLAVADKETSLLITGNGDVIEPEDNLIAMGSGGPFAQAAARALLDNTELSAREIAERALNIAADICIYTNRHLTIEEM.

T7 is a catalytic residue. Na(+) is bound by residues A162, C165, and T168.

Belongs to the peptidase T1B family. HslV subfamily. In terms of assembly, a double ring-shaped homohexamer of HslV is capped on each side by a ring-shaped HslU homohexamer. The assembly of the HslU/HslV complex is dependent on binding of ATP.

It is found in the cytoplasm. The enzyme catalyses ATP-dependent cleavage of peptide bonds with broad specificity.. Allosterically activated by HslU binding. In terms of biological role, protease subunit of a proteasome-like degradation complex believed to be a general protein degrading machinery. The chain is ATP-dependent protease subunit HslV from Thioalkalivibrio sulfidiphilus (strain HL-EbGR7).